Reading from the N-terminus, the 134-residue chain is Lymphocyte antigen 6G (134 aa).

The first 26 residues, 1–26, serve as a signal peptide directing secretion; that stretch reads MDTCHIAKSCVLILLVVLLCAERAQG. A UPAR/Ly6 domain is found at 27–118; sequence LECYNCIGVP…PTGGSSWTMA (92 aa). Cystine bridges form between Cys29–Cys53, Cys32–Cys41, Cys46–Cys74, Cys78–Cys98, and Cys99–Cys104. Asn105 carries GPI-anchor amidated asparagine lipidation. The propeptide at 106-134 is removed in mature form; that stretch reads AAVPTGGSSWTMAGVLLFSLVSVLLQTFL.

In terms of tissue distribution, expressed in bone marrow.

It localises to the cell membrane. In Mus musculus (Mouse), this protein is Lymphocyte antigen 6G (Ly6g).